Reading from the N-terminus, the 194-residue chain is Ion-translocating oxidoreductase complex subunit A (194 aa).

6 consecutive transmembrane segments (helical) span residues 4–24, 39–59, 71–91, 102–122, 135–155, and 172–192; these read LALILVSAILVNNFVLVQFLG, IGLSLATTFVLTLAAICSYIL, FLRTIGFILVIAVVVQFTEML, VLGIFLPLITTNCIVLGVALL, TTQGFGAGLGFSLVLVLFAAL, and AIGMITAGLMSLAFMGFSGLI.

This sequence belongs to the NqrDE/RnfAE family. The complex is composed of six subunits: RnfA, RnfB, RnfC, RnfD, RnfE and RnfG.

Its subcellular location is the cell inner membrane. Part of a membrane-bound complex that couples electron transfer with translocation of ions across the membrane. The sequence is that of Ion-translocating oxidoreductase complex subunit A from Pseudomonas paraeruginosa (strain DSM 24068 / PA7) (Pseudomonas aeruginosa (strain PA7)).